A 472-amino-acid chain; its full sequence is Siroheme synthase (472 aa).

The segment at 1–203 (MNYLPIFIDI…GKIQEAKADL (203 aa)) is precorrin-2 dehydrogenase /sirohydrochlorin ferrochelatase. Residues 22–23 (DI) and 43–44 (KS) contribute to the NAD(+) site. Ser128 is subject to Phosphoserine. A uroporphyrinogen-III C-methyltransferase region spans residues 216-472 (GEVYLVGGGP…SSKKSYLFGG (257 aa)). Pro225 contacts S-adenosyl-L-methionine. Asp248 functions as the Proton acceptor in the catalytic mechanism. Catalysis depends on Lys270, which acts as the Proton donor. Residues 301–303 (GGD), Ile306, 331–332 (TA), Met383, and Gly412 each bind S-adenosyl-L-methionine.

The protein in the N-terminal section; belongs to the precorrin-2 dehydrogenase / sirohydrochlorin ferrochelatase family. In the C-terminal section; belongs to the precorrin methyltransferase family.

The enzyme catalyses uroporphyrinogen III + 2 S-adenosyl-L-methionine = precorrin-2 + 2 S-adenosyl-L-homocysteine + H(+). It carries out the reaction precorrin-2 + NAD(+) = sirohydrochlorin + NADH + 2 H(+). It catalyses the reaction siroheme + 2 H(+) = sirohydrochlorin + Fe(2+). The protein operates within cofactor biosynthesis; adenosylcobalamin biosynthesis; precorrin-2 from uroporphyrinogen III: step 1/1. Its pathway is cofactor biosynthesis; adenosylcobalamin biosynthesis; sirohydrochlorin from precorrin-2: step 1/1. It functions in the pathway porphyrin-containing compound metabolism; siroheme biosynthesis; precorrin-2 from uroporphyrinogen III: step 1/1. It participates in porphyrin-containing compound metabolism; siroheme biosynthesis; siroheme from sirohydrochlorin: step 1/1. The protein operates within porphyrin-containing compound metabolism; siroheme biosynthesis; sirohydrochlorin from precorrin-2: step 1/1. Multifunctional enzyme that catalyzes the SAM-dependent methylations of uroporphyrinogen III at position C-2 and C-7 to form precorrin-2 via precorrin-1. Then it catalyzes the NAD-dependent ring dehydrogenation of precorrin-2 to yield sirohydrochlorin. Finally, it catalyzes the ferrochelation of sirohydrochlorin to yield siroheme. This chain is Siroheme synthase, found in Ruthia magnifica subsp. Calyptogena magnifica.